A 474-amino-acid polypeptide reads, in one-letter code: MTKKLHIKTWGCQMNEYDSSKMADLLDATHGYQLTDVAEEADVLLLNTCSIREKAQEKVFHQLGRWKLLKEKNPDLIIGVGGCVASQEGEHIRQRAHYVDIIFGPQTLHRLPEMINSVRGDRSPVVDISFPEIEKFDRLPEPRAEGPTAFVSIMEGCNKYCTYCVVPYTRGEEVSRPSDDILFEIAQLAAQGVREVNLLGQNVNAWRGENYDGTTGSFADLLRLVAAIDGIDRIRFTTSHPIEFTDDIIEVYRDTPELVSFLHLPVQSGSDRILNLMGRTHTALEYKAIIRKLRAARPDIQISSDFIVGFPGETTEDFEKTMKLIADVNFDMSYSFIFSARPGTPAADMVDDVPEEEKKQRLYILQERINQQAMAWSRRMLGTTQRILVEGTSRKSIMELSGRTENNRVVNFEGTPDMIGKFVDVEITDVYPNSLRGKVVRTEDEMGLRMAETPESVIARTRKENDLGVGYYQP.

One can recognise an MTTase N-terminal domain in the interval 3 to 120 (KKLHIKTWGC…LPEMINSVRG (118 aa)). Residues Cys12, Cys49, Cys83, Cys157, Cys161, and Cys164 each contribute to the [4Fe-4S] cluster site. One can recognise a Radical SAM core domain in the interval 143–375 (RAEGPTAFVS…QERINQQAMA (233 aa)). The TRAM domain occupies 378 to 441 (RRMLGTTQRI…PNSLRGKVVR (64 aa)).

This sequence belongs to the methylthiotransferase family. MiaB subfamily. In terms of assembly, monomer. The cofactor is [4Fe-4S] cluster.

It localises to the cytoplasm. It carries out the reaction N(6)-dimethylallyladenosine(37) in tRNA + (sulfur carrier)-SH + AH2 + 2 S-adenosyl-L-methionine = 2-methylsulfanyl-N(6)-dimethylallyladenosine(37) in tRNA + (sulfur carrier)-H + 5'-deoxyadenosine + L-methionine + A + S-adenosyl-L-homocysteine + 2 H(+). Catalyzes the methylthiolation of N6-(dimethylallyl)adenosine (i(6)A), leading to the formation of 2-methylthio-N6-(dimethylallyl)adenosine (ms(2)i(6)A) at position 37 in tRNAs that read codons beginning with uridine. In Escherichia coli (strain SE11), this protein is tRNA-2-methylthio-N(6)-dimethylallyladenosine synthase.